A 162-amino-acid polypeptide reads, in one-letter code: 6,7-dimethyl-8-ribityllumazine synthase (162 aa).

5-amino-6-(D-ribitylamino)uracil-binding positions include Phe-22, 56 to 58 (TFE), and 80 to 82 (AVI). 85–86 (GT) serves as a coordination point for (2S)-2-hydroxy-3-oxobutyl phosphate. His-88 (proton donor) is an active-site residue. 5-amino-6-(D-ribitylamino)uracil is bound at residue Met-113. Arg-127 lines the (2S)-2-hydroxy-3-oxobutyl phosphate pocket.

Belongs to the DMRL synthase family.

It catalyses the reaction (2S)-2-hydroxy-3-oxobutyl phosphate + 5-amino-6-(D-ribitylamino)uracil = 6,7-dimethyl-8-(1-D-ribityl)lumazine + phosphate + 2 H2O + H(+). It participates in cofactor biosynthesis; riboflavin biosynthesis; riboflavin from 2-hydroxy-3-oxobutyl phosphate and 5-amino-6-(D-ribitylamino)uracil: step 1/2. Catalyzes the formation of 6,7-dimethyl-8-ribityllumazine by condensation of 5-amino-6-(D-ribitylamino)uracil with 3,4-dihydroxy-2-butanone 4-phosphate. This is the penultimate step in the biosynthesis of riboflavin. The chain is 6,7-dimethyl-8-ribityllumazine synthase from Anaeromyxobacter dehalogenans (strain 2CP-1 / ATCC BAA-258).